A 372-amino-acid chain; its full sequence is 4-hydroxy-3-methylbut-2-en-1-yl diphosphate synthase (flavodoxin) (372 aa).

Residues cysteine 270, cysteine 273, cysteine 305, and glutamate 312 each coordinate [4Fe-4S] cluster.

The protein belongs to the IspG family. The cofactor is [4Fe-4S] cluster.

It catalyses the reaction (2E)-4-hydroxy-3-methylbut-2-enyl diphosphate + oxidized [flavodoxin] + H2O + 2 H(+) = 2-C-methyl-D-erythritol 2,4-cyclic diphosphate + reduced [flavodoxin]. Its pathway is isoprenoid biosynthesis; isopentenyl diphosphate biosynthesis via DXP pathway; isopentenyl diphosphate from 1-deoxy-D-xylulose 5-phosphate: step 5/6. In terms of biological role, converts 2C-methyl-D-erythritol 2,4-cyclodiphosphate (ME-2,4cPP) into 1-hydroxy-2-methyl-2-(E)-butenyl 4-diphosphate. The sequence is that of 4-hydroxy-3-methylbut-2-en-1-yl diphosphate synthase (flavodoxin) from Aliivibrio fischeri (strain ATCC 700601 / ES114) (Vibrio fischeri).